A 172-amino-acid chain; its full sequence is Alpha-crystallin A chain (172 aa).

Methionine 1 bears the N-acetylmethionine mark. Residues 1–63 (MDVTIQHPWF…RTVLDSGISE (63 aa)) are required for complex formation with BFSP1 and BFSP2. Glutamine 6 carries the post-translational modification Deamidated glutamine; partial. Serine 45 carries the phosphoserine modification. Glutamine 50 is subject to Deamidated glutamine; partial. The sHSP domain maps to 52 to 163 (LFRTVLDSGI…HERAIPVARE (112 aa)). Lysine 70 is subject to N6-acetyllysine. A Deamidated glutamine; partial modification is found at glutamine 90. At lysine 99 the chain carries N6-acetyllysine. Histidine 100 is a binding site for Zn(2+). Asparagine 101 carries the post-translational modification Deamidated asparagine; partial. Residues glutamate 102 and histidine 107 each contribute to the Zn(2+) site. At serine 122 the chain carries Phosphoserine. Asparagine 123 is modified (deamidated asparagine; partial). Glutamine 147 bears the Deamidated glutamine; partial mark. A Zn(2+)-binding site is contributed by histidine 154. Serine 168 carries an O-linked (GlcNAc) serine glycan.

Belongs to the small heat shock protein (HSP20) family. In terms of assembly, heteromer composed of three CRYAA and one CRYAB subunits. Inter-subunit bridging via zinc ions enhances stability, which is crucial as there is no protein turn over in the lens. Can also form homodimers and homotetramers (dimers of dimers) which serve as the building blocks of homooligomers. Within homooligomers, the zinc-binding motif is created from residues of 3 different molecules. His-100 and Glu-102 from one molecule are ligands of the zinc ion, and His-107 and His-154 residues from additional molecules complete the site with tetrahedral coordination geometry. Part of a complex required for lens intermediate filament formation composed of BFSP1, BFSP2 and CRYAA. Acetylation at Lys-70 may increase chaperone activity. In terms of processing, undergoes age-dependent proteolytical cleavage at the C-terminus.

It localises to the cytoplasm. The protein resides in the nucleus. In terms of biological role, contributes to the transparency and refractive index of the lens. Acts as a chaperone, preventing aggregation of various proteins under a wide range of stress conditions. Required for the correct formation of lens intermediate filaments as part of a complex composed of BFSP1, BFSP2 and CRYAA. This Macaca mulatta (Rhesus macaque) protein is Alpha-crystallin A chain (CRYAA).